We begin with the raw amino-acid sequence, 156 residues long: Small ribosomal subunit protein uS7 (156 aa).

This sequence belongs to the universal ribosomal protein uS7 family. Part of the 30S ribosomal subunit. Contacts proteins S9 and S11.

Functionally, one of the primary rRNA binding proteins, it binds directly to 16S rRNA where it nucleates assembly of the head domain of the 30S subunit. Is located at the subunit interface close to the decoding center, probably blocks exit of the E-site tRNA. This Azoarcus sp. (strain BH72) protein is Small ribosomal subunit protein uS7.